Consider the following 227-residue polypeptide: MAKFSKGQISIELILLMTAVLLAGILVSVNMTRFTFEGDILSDVREDAFQVFEISTDTPIIVYSLNFSNVKISPSTNLYNAWLQINDTGNDTYLWYYSDGTFKGLANTSDPDESITEENLVLLPHEGYASDIIFRSNVPTAMSWDSYEIDFNDIKKFEIIANDVENNPISYSLTHGDSPETSNQAYLNIKANEVTIIVTKANDKVFEVIANTTSGTIELLPYTETSP.

Positions 1–7 are excised as a propeptide; sequence MAKFSKG. A QXSXEXXXL motif is present at residues 8 to 16; it reads QISIELILL.

Post-translationally, the N-terminus is probably cleaved by the prepilin peptidase EppA, which recognizes the class III signal sequence.

It is found in the secreted. The protein localises to the cell surface. The protein resides in the fimbrium. This Methanococcus maripaludis (strain DSM 14266 / JCM 13030 / NBRC 101832 / S2 / LL) protein is Probable minor pilin MMP0600.